A 205-amino-acid chain; its full sequence is High frequency lysogenization protein HflD homolog (205 aa).

Belongs to the HflD family.

It localises to the cytoplasm. The protein localises to the cell inner membrane. This is High frequency lysogenization protein HflD homolog from Shewanella pealeana (strain ATCC 700345 / ANG-SQ1).